Here is a 249-residue protein sequence, read N- to C-terminus: Pyridoxamine 5'-phosphate oxidase family protein ustO (249 aa).

21–24 is a binding site for substrate; it reads LFFV. FMN-binding positions include 76–81, 91–92, arginine 105, and 163–164; these read ATVMFC and RL. 215–217 is a binding site for substrate; the sequence is ASY. Residues 227 to 247 form a helical membrane-spanning segment; sequence TGMALMFLVMVVAQWVGYVLY.

It belongs to the pyridoxamine 5'-phosphate oxidase family. Requires FMN as cofactor.

The protein resides in the membrane. It participates in mycotoxin biosynthesis. Functionally, pyridoxamine 5'-phosphate oxidase family protein; part of the gene cluster that mediates the biosynthesis of the secondary metabolite ustiloxin B, an antimitotic tetrapeptide. First, ustA is processed by the subtilisin-like endoprotease Kex2 that is outside the ustiloxin B gene cluster, at the C-terminal side of Arg-Lys, after transfer to Golgi apparatus through the endoplasmic reticulum (ER). Cleavage by KEX2 generates 16 peptides YAIG-I to YAIG-XVI. To process the precursor peptide further, at least two peptidases are necessary to cleave the N-terminal and C-terminal sides of the Tyr-Ala-Ile-Gly core peptide which serves as backbone for the synthesis of ustiloxin B, through cyclization and modification of the tyrosine with a non-protein coding amino acid, norvaline. One of the two peptidases must be the serine peptidase ustP; and the other pepdidase is probably ustH. Macrocyclization of the core peptide derived from ustA requires the tyrosinase ustQ, as well as the homologous oxidases ustYa and ustYb, and leads to the production of the first cyclization product N-desmethylustiloxin F. For the formation of N-desmethylustiloxin F, three oxidation steps are required, hydroxylation at the benzylic position, hydroxylation at either the aromatic ring of Tyr or beta-position of Ile, and oxidative cyclization. UstQ may catalyze the oxidation of a phenol moiety, whereas the ustYa and ustYb are most likely responsible for the remaining two-step oxidations. N-desmethylustiloxin F is then methylated by ustM to yield ustiloxin F which in turn substrate of the cytochrome P450 monooxygenase ustC which catalyzes the formation of S-deoxyustiloxin H. The flavoprotein monooxygenases ustF1 and ustF2 then participate in the modification of the side chain of S-deoxyustiloxin H, leading to the synthesis of an oxime intermediate, via ustiloxin H. Finally, carboxylative dehydration performed by the cysteine desulfurase-like protein ustD yields ustiloxin B. This is Pyridoxamine 5'-phosphate oxidase family protein ustO from Aspergillus flavus (strain ATCC 200026 / FGSC A1120 / IAM 13836 / NRRL 3357 / JCM 12722 / SRRC 167).